Consider the following 145-residue polypeptide: UPF0310 protein Mvan_0064 (145 aa).

This sequence belongs to the UPF0310 family.

In Mycolicibacterium vanbaalenii (strain DSM 7251 / JCM 13017 / BCRC 16820 / KCTC 9966 / NRRL B-24157 / PYR-1) (Mycobacterium vanbaalenii), this protein is UPF0310 protein Mvan_0064.